Consider the following 377-residue polypeptide: UPF0425 pyridoxal phosphate-dependent protein MTH_1914 (377 aa).

Lys-207 bears the N6-(pyridoxal phosphate)lysine mark.

The protein belongs to the UPF0425 family. The cofactor is pyridoxal 5'-phosphate.

The sequence is that of UPF0425 pyridoxal phosphate-dependent protein MTH_1914 from Methanothermobacter thermautotrophicus (strain ATCC 29096 / DSM 1053 / JCM 10044 / NBRC 100330 / Delta H) (Methanobacterium thermoautotrophicum).